A 243-amino-acid polypeptide reads, in one-letter code: UPF0758 protein sll0766 (243 aa).

One can recognise an MPN domain in the interval 113–235 (VVDSPEAAAI…HQSLRQCTDL (123 aa)). Zn(2+) is bound by residues H184, H186, and D197. The short motif at 184 to 197 (HNHPSGGLEPSPED) is the JAMM motif element.

This sequence belongs to the UPF0758 family.

The sequence is that of UPF0758 protein sll0766 from Synechocystis sp. (strain ATCC 27184 / PCC 6803 / Kazusa).